The following is a 149-amino-acid chain: Protein OPG200 (149 aa).

Belongs to the orthopoxvirus OPG200 family. As to quaternary structure, homodimers. Interacts with host IKBKB; this interaction inhibits host NF-kappa-B activation.

In terms of biological role, contributes to virulence by binding to the host IKBKB subunit of the IKK complex and preventing host NF-kappa-B activation in response to pro-inflammatory stimuli such as TNF-alpha or IL1B. Mechanistically, sterically hinders the direct contact between the kinase domains of IKBKB in the IKK complex containing IKBKB, CHUK/IKKA and NEMO. The polypeptide is Protein OPG200 (OPG200) (Vaccinia virus (strain Western Reserve) (VACV)).